The chain runs to 242 residues: Phosducin-like protein 2 (242 aa).

One can recognise a Phosducin domain in the interval 34 to 201; it reads VLRLQKEAMV…LEWKLAEVGA (168 aa). The segment at 89–242 is thioredoxin fold; it reads FGELREISGN…SSNSDSEDTK (154 aa).

This sequence belongs to the phosducin family. In terms of assembly, interacts with the CCT chaperonin complex and actin.

The protein localises to the endoplasmic reticulum. Functionally, essential for male fertility, spermiogenesis and acrosome formation. The protein is Phosducin-like protein 2 (PDCL2) of Bos taurus (Bovine).